We begin with the raw amino-acid sequence, 488 residues long: Ribulose bisphosphate carboxylase large chain 1 (488 aa).

Positions 128 and 178 each coordinate substrate. Lys-180 (proton acceptor) is an active-site residue. Lys-182 lines the substrate pocket. Mg(2+)-binding residues include Lys-206, Asp-208, and Glu-209. Lys-206 bears the N6-carboxylysine mark. The Proton acceptor role is filled by His-298. 3 residues coordinate substrate: Arg-299, His-331, and Ser-383.

This sequence belongs to the RuBisCO large chain family. Type I subfamily. As to quaternary structure, heterohexadecamer of 8 large chains and 8 small chains. Mg(2+) is required as a cofactor.

It carries out the reaction 2 (2R)-3-phosphoglycerate + 2 H(+) = D-ribulose 1,5-bisphosphate + CO2 + H2O. The enzyme catalyses D-ribulose 1,5-bisphosphate + O2 = 2-phosphoglycolate + (2R)-3-phosphoglycerate + 2 H(+). RuBisCO catalyzes two reactions: the carboxylation of D-ribulose 1,5-bisphosphate, the primary event in carbon dioxide fixation, as well as the oxidative fragmentation of the pentose substrate. Both reactions occur simultaneously and in competition at the same active site. In Nitrobacter hamburgensis (strain DSM 10229 / NCIMB 13809 / X14), this protein is Ribulose bisphosphate carboxylase large chain 1.